A 645-amino-acid polypeptide reads, in one-letter code: Threonine--tRNA ligase (645 aa).

In terms of domain architecture, TGS spans 1-63 (MEQINIQFPD…ETDGSIEIVT (63 aa)). The tract at residues 242-540 (DHRKIGKELE…LTEETKGAFP (299 aa)) is catalytic. Positions 336, 387, and 517 each coordinate Zn(2+).

It belongs to the class-II aminoacyl-tRNA synthetase family. Homodimer. Zn(2+) serves as cofactor.

The protein localises to the cytoplasm. It catalyses the reaction tRNA(Thr) + L-threonine + ATP = L-threonyl-tRNA(Thr) + AMP + diphosphate + H(+). Its function is as follows. Catalyzes the attachment of threonine to tRNA(Thr) in a two-step reaction: L-threonine is first activated by ATP to form Thr-AMP and then transferred to the acceptor end of tRNA(Thr). Also edits incorrectly charged L-seryl-tRNA(Thr). The protein is Threonine--tRNA ligase of Staphylococcus aureus (strain NCTC 8325 / PS 47).